Reading from the N-terminus, the 313-residue chain is Secreted mono- and diacylglycerol lipase MDL5 (313 aa).

A signal peptide spans 1–20 (MQLQYVLTLLWIIFAQNVFS). The cysteines at positions 66 and 306 are disulfide-linked. Asparagine 72 and asparagine 111 each carry an N-linked (GlcNAc...) asparagine glycan. Serine 180 (nucleophile) is an active-site residue. Residue aspartate 238 is part of the active site. The N-linked (GlcNAc...) asparagine glycan is linked to asparagine 263. Histidine 290 is an active-site residue.

The protein belongs to the AB hydrolase superfamily. Lipase family. Class 3 subfamily.

Its subcellular location is the secreted. It localises to the cell wall. It catalyses the reaction a monoacylglycerol + H2O = glycerol + a fatty acid + H(+). The enzyme catalyses a diacylglycerol + H2O = a monoacylglycerol + a fatty acid + H(+). Functionally, secreted lipase involved in Dandruff and seborrheic dermatitis (D/SD) probably via lipase-mediated breakdown of sebaceous lipids and release of irritating free fatty acids. Shows activity against monoglyceride and diglyceride substrates, but not triglyceride substrates and does not exhibit regio-selective production of diacylglycerols. Cleaves oleic acid from 1,2 isomers of diolein on both the 1 and the 2 position of the glycerol backbone, resulting mainly in free fatty acids but no monoolein is detected. Shows activity on monoolein and liberates mostly free fatty acids, but can also perform the reverse reaction and produce diolein. The protein is Secreted mono- and diacylglycerol lipase MDL5 of Malassezia globosa (strain ATCC MYA-4612 / CBS 7966) (Dandruff-associated fungus).